The sequence spans 209 residues: Response regulator protein VraR (209 aa).

One can recognise a Response regulatory domain in the interval 4 to 120 (KVLFVDDHEM…DIADAVRKTY (117 aa)). D55 carries the post-translational modification 4-aspartylphosphate. The 66-residue stretch at 141 to 206 (RAELYEMLTE…QAVIYAFQHN (66 aa)) folds into the HTH luxR-type domain. Residues 165–184 (NQEIASASHITIKTVKTHVS) constitute a DNA-binding region (H-T-H motif).

In terms of processing, phosphorylated by VraS.

The protein resides in the cytoplasm. Member of the two-component regulatory system VraS/VraR involved in the control of the cell wall peptidoglycan biosynthesis. This chain is Response regulator protein VraR (vraR), found in Staphylococcus epidermidis (strain ATCC 35984 / DSM 28319 / BCRC 17069 / CCUG 31568 / BM 3577 / RP62A).